Here is a 706-residue protein sequence, read N- to C-terminus: Polyribonucleotide nucleotidyltransferase (706 aa).

Positions 488 and 494 each coordinate Mg(2+). A KH domain is found at 555 to 614; the sequence is PRLFTMKINPDKIRDVIGKGGSVIRALTEETGTQINIDEDGTITIASADPAKAEEAKRRI. The S1 motif domain occupies 624-692; it reads GKIYEGPITK…EKGRIKLSMK (69 aa).

This sequence belongs to the polyribonucleotide nucleotidyltransferase family. Requires Mg(2+) as cofactor.

It is found in the cytoplasm. It catalyses the reaction RNA(n+1) + phosphate = RNA(n) + a ribonucleoside 5'-diphosphate. Functionally, involved in mRNA degradation. Catalyzes the phosphorolysis of single-stranded polyribonucleotides processively in the 3'- to 5'-direction. In Albidiferax ferrireducens (strain ATCC BAA-621 / DSM 15236 / T118) (Rhodoferax ferrireducens), this protein is Polyribonucleotide nucleotidyltransferase.